We begin with the raw amino-acid sequence, 199 residues long: 3-isopropylmalate dehydratase small subunit (199 aa).

This sequence belongs to the LeuD family. LeuD type 1 subfamily. In terms of assembly, heterodimer of LeuC and LeuD.

The catalysed reaction is (2R,3S)-3-isopropylmalate = (2S)-2-isopropylmalate. The protein operates within amino-acid biosynthesis; L-leucine biosynthesis; L-leucine from 3-methyl-2-oxobutanoate: step 2/4. Functionally, catalyzes the isomerization between 2-isopropylmalate and 3-isopropylmalate, via the formation of 2-isopropylmaleate. The protein is 3-isopropylmalate dehydratase small subunit of Mycobacteroides abscessus (strain ATCC 19977 / DSM 44196 / CCUG 20993 / CIP 104536 / JCM 13569 / NCTC 13031 / TMC 1543 / L948) (Mycobacterium abscessus).